Consider the following 457-residue polypeptide: Argininosuccinate lyase (457 aa).

This sequence belongs to the lyase 1 family. Argininosuccinate lyase subfamily.

Its subcellular location is the cytoplasm. The enzyme catalyses 2-(N(omega)-L-arginino)succinate = fumarate + L-arginine. It participates in amino-acid biosynthesis; L-arginine biosynthesis; L-arginine from L-ornithine and carbamoyl phosphate: step 3/3. This chain is Argininosuccinate lyase, found in Staphylococcus carnosus (strain TM300).